Consider the following 429-residue polypeptide: Ribosomal RNA small subunit methyltransferase B (429 aa).

Residues Cys-254–Lys-260, Asp-277, Asp-303, and Asp-322 each bind S-adenosyl-L-methionine. Cys-375 acts as the Nucleophile in catalysis.

This sequence belongs to the class I-like SAM-binding methyltransferase superfamily. RsmB/NOP family.

The protein resides in the cytoplasm. It carries out the reaction cytidine(967) in 16S rRNA + S-adenosyl-L-methionine = 5-methylcytidine(967) in 16S rRNA + S-adenosyl-L-homocysteine + H(+). Its function is as follows. Specifically methylates the cytosine at position 967 (m5C967) of 16S rRNA. The sequence is that of Ribosomal RNA small subunit methyltransferase B from Escherichia coli (strain UTI89 / UPEC).